We begin with the raw amino-acid sequence, 422 residues long: Histidine--tRNA ligase (422 aa).

Belongs to the class-II aminoacyl-tRNA synthetase family. As to quaternary structure, homodimer.

The protein resides in the cytoplasm. It carries out the reaction tRNA(His) + L-histidine + ATP = L-histidyl-tRNA(His) + AMP + diphosphate + H(+). This is Histidine--tRNA ligase from Ruthia magnifica subsp. Calyptogena magnifica.